A 238-amino-acid polypeptide reads, in one-letter code: ATP-dependent Clp protease ATP-binding subunit CLPT1, chloroplastic (238 aa).

The N-terminal 64 residues, 1–64, are a transit peptide targeting the chloroplast; it reads MASYTVSFIP…VPKLRCLTSA (64 aa). Residues 83-228 enclose the Clp R domain; it reads IPKWSARAIK…KEVEKSMNED (146 aa). Repeat stretches follow at residues 86 to 151 and 163 to 228; these read WSAR…LGKS and LTEP…MNED.

Belongs to the ClpA/ClpB family. Monomer and homodimer. Binds to the CLP3-6 ring (P-ring). The dimers monomerize before association to the P-ring. Component of the chloroplastic Clp protease core complex which consist of at least 16 proteins: CLPP4 (3 copies), CLPP5 (3 copies), CLPR4 (2 copies), ClpP1 (1 copy), CLPP6 (1 copy), CLPR2 (1 copy), CLPT1 (1 copy), CLPT2 (1 copy) and 3 copies of CLPP3 and/or CLPR1 and/or CLPR3. Interacts with CLPC2 and CLPD. Interacts with CPN21. No interactions with CLPS1.

The protein localises to the plastid. Its subcellular location is the chloroplast. Functionally, accessory protein regulating the assembly of the plastidial Clp protease system. CLPT1 first binds to the heptameric P-ring containing the CLP3-6 subunits followed by CLPT2, and only then does the P-ring combine with the R-ring composed of the clpP1 and CLPR1-4 subunits. Once the core complex is fully assembled, it then associates to the CLPC chaperone partner to form the functional protease. CLPT1 and CLPT2 are partially redundant. The protein is ATP-dependent Clp protease ATP-binding subunit CLPT1, chloroplastic of Arabidopsis thaliana (Mouse-ear cress).